The chain runs to 470 residues: Putative gustatory receptor 28b (470 aa).

At 1-76 (MDIEMAKEPV…KTGKKAIKKT (76 aa)) the chain is on the cytoplasmic side. The chain crosses the membrane as a helical span at residues 77–97 (IFGYINGIMHIAMFVFAYSLT). Topologically, residues 98–119 (IYNNCESVASYFFRSRITYFGD) are extracellular. The helical transmembrane segment at 120 to 140 (LMQIVSGFIGVTVIYLTAFVP) threads the bilayer. The Cytoplasmic segment spans residues 141-175 (NHRLERCLQKFHTMDVQLQTVGVKIMYSKVLRFSY). A helical membrane pass occupies residues 176-196 (MVLISMFLVNVLFTGGTFSVL). The Extracellular portion of the chain corresponds to 197–204 (YSSEVAPT). The chain crosses the membrane as a helical span at residues 205–225 (MALHFTFLIQHTVIAIAIALF). The Cytoplasmic segment spans residues 226-309 (SCFTYLVEMR…ATANKYFTYQ (84 aa)). Residues 310–330 (LLTIISIAFLIIVFDAYYVLE) traverse the membrane as a helical segment. Residues 331–346 (TLLGKSKRESKFKTVE) lie on the Extracellular side of the membrane. The helical transmembrane segment at 347–367 (FVTFFSCQMILYLIAIISIVE) threads the bilayer. Residues 368 to 423 (GSNRAIKKSEKTGGIVHSLLNKTKSAEVKEKLQQFSMQLMHLKINFTAAGLFNIDR) are Cytoplasmic-facing. Residues 424 to 444 (TLYFTISGALTTYLIILLQFT) form a helical membrane-spanning segment. The Extracellular portion of the chain corresponds to 445–470 (SNSPNNGYGNGSSCCETFNNMTNHTL). Residues Asn454, Asn464, and Asn467 are each glycosylated (N-linked (GlcNAc...) asparagine).

Belongs to the insect chemoreceptor superfamily. Gustatory receptor (GR) family. Gr66a subfamily. Isoforms A and E have taste neuron-specific expression restricted to the labial palps, the internal taste organs in the pharynx, and the legs. In addition to expression in a large number of taste neurons, isoform A is also expressed in a few nonchemosensory neurons, including the campaniform sensilla of the wing, leg stretch receptors, and multiple dendritic neurons in the abdomen. Isoform B is the only receptor not expressed in gustatory receptor neurons in the labellum. We observe expression of this receptor in a single large cell at the base of each maxillary palp, in campaniform sensilla of the wing, and multiple dendritic neurons in the abdomen. Isoform C is expressed by many gustatory receptor neurons in the labial palps, the pharyngeal taste clusters, and taste neurons in the legs. In addition, isoform C expressed in a single cell at the base of the maxillary palps, neurons in the Johnston's organ (JO), campaniform sensilla of the wing, stretch receptors and the femoral chordotonal organ of the legs, and multiple dendritic neurons in the abdomen. Isoform D is expressed in a small number of gustatory receptor neurons in the labial palps, the ventral cibarial sense organ (VCSO), and legs. Atypical expression is observed in three neurons in the arista, campaniform sensilla of the wing, stretch and femoral chordotonal organ receptors in the legs, and multiple dendritic neurons in the abdomen. In larvae, Isoform A is expressed in neurons of the terminal external chemosensory organ and the dorsal external chemosensory organ; and isoform E is expressed in neurons of the terminal external chemosensory organ.

Its subcellular location is the cell membrane. Its function is as follows. Probable gustatory receptor which mediates acceptance or avoidance behavior, depending on its substrates. Atypical expression also suggests nongustatory roles in the nervous system and tissues involved in proprioception, hygroreception, and other sensory modalities. It is also possible that it has chemosensory roles in the detection of internal ligands. The polypeptide is Putative gustatory receptor 28b (Gr28b) (Drosophila melanogaster (Fruit fly)).